We begin with the raw amino-acid sequence, 367 residues long: GTP cyclohydrolase FolE2 (367 aa).

Belongs to the GTP cyclohydrolase IV family.

It catalyses the reaction GTP + H2O = 7,8-dihydroneopterin 3'-triphosphate + formate + H(+). The protein operates within cofactor biosynthesis; 7,8-dihydroneopterin triphosphate biosynthesis; 7,8-dihydroneopterin triphosphate from GTP: step 1/1. In terms of biological role, converts GTP to 7,8-dihydroneopterin triphosphate. The polypeptide is GTP cyclohydrolase FolE2 (Ruegeria sp. (strain TM1040) (Silicibacter sp.)).